A 311-amino-acid chain; its full sequence is Porphobilinogen deaminase (311 aa).

Cys-245 is modified (S-(dipyrrolylmethanemethyl)cysteine).

It belongs to the HMBS family. Monomer. Dipyrromethane serves as cofactor.

The catalysed reaction is 4 porphobilinogen + H2O = hydroxymethylbilane + 4 NH4(+). It functions in the pathway porphyrin-containing compound metabolism; protoporphyrin-IX biosynthesis; coproporphyrinogen-III from 5-aminolevulinate: step 2/4. Its function is as follows. Tetrapolymerization of the monopyrrole PBG into the hydroxymethylbilane pre-uroporphyrinogen in several discrete steps. The protein is Porphobilinogen deaminase of Deinococcus deserti (strain DSM 17065 / CIP 109153 / LMG 22923 / VCD115).